Reading from the N-terminus, the 529-residue chain is DNA-binding protein (529 aa).

A compositionally biased stretch (basic and acidic residues) spans 1 to 17 (MASREEEQRETTPERGR). Disordered stretches follow at residues 1 to 108 (MASR…VDSE) and 125 to 168 (PVLI…SEST). A compositionally biased stretch (basic residues) spans 129–139 (KHGKGGKRTVR). A compositionally biased stretch (basic and acidic residues) spans 140-155 (RLNEDDPVARGMRTQE). Positions 156 to 165 (EKEESSEAES) are enriched in acidic residues. Tyr195 is subject to Phosphotyrosine; by host. 2 residues coordinate Zn(2+): Cys284 and His286. Residues 297-331 (IEMDVTSENGQRALKEQSSKAKIVKNRWGRNVVQI) form a flexible loop region. Cys339, Cys355, Cys396, Cys398, Cys450, and Cys467 together coordinate Zn(2+). Residues 513–529 (VSLPVAHSDARQNPFDF) form a C-terminal arm, DBP binding region.

It belongs to the adenoviridae E2A DNA-binding protein family. As to quaternary structure, homomultimerizes on viral ssDNA bound to pTP. Forms an initiation complex with viral polymerase, pTP and hosts NFIA and POU2F1/OCT1. Interacts with host SRCAP.

Its subcellular location is the host nucleus. Plays a role in the elongation phase of viral strand displacement replication by unwinding the template in an ATP-independent fashion, employing its capacity to form multimers. Also enhances the rate of initiation. Released from template upon second strand synthesis. Assembles in complex with viral pTP, viral pol, host NFIA and host POU2F1/OCT1 on viral origin of replication. Covers the whole ssDNA genome during synthesis. The complementary strand synthesis induces its release from DNA template. May inhibit cellular transcription mediated by the interaction between host SRCAP and CBP. This is DNA-binding protein from Human adenovirus C serotype 2 (HAdV-2).